A 505-amino-acid chain; its full sequence is Cytochrome P450 4Z1 (505 aa).

The Cytoplasmic segment spans residues 1-9; the sequence is MEPSWLQEL. The helical; Signal-anchor for type II membrane protein transmembrane segment at 10 to 30 threads the bilayer; it reads MAHPFLLLILLCMSLLLFQVI. Over 31–505 the chain is Lumenal; sequence RLYQRRRWMI…GIHVFAKKVC (475 aa). C452 contributes to the heme binding site.

It belongs to the cytochrome P450 family. It depends on heme as a cofactor. Preferentially detected in breast carcinoma tissue and mammary gland, whereas only marginal expression is found in all other tested tissues.

The protein localises to the endoplasmic reticulum membrane. Its subcellular location is the microsome membrane. The enzyme catalyses an organic molecule + reduced [NADPH--hemoprotein reductase] + O2 = an alcohol + oxidized [NADPH--hemoprotein reductase] + H2O + H(+). It catalyses the reaction dodecanoate + reduced [NADPH--hemoprotein reductase] + O2 = 7-hydroxydodecanoate + oxidized [NADPH--hemoprotein reductase] + H2O + H(+). The catalysed reaction is dodecanoate + reduced [NADPH--hemoprotein reductase] + O2 = 8-hydroxydodecanoate + oxidized [NADPH--hemoprotein reductase] + H2O + H(+). It carries out the reaction dodecanoate + reduced [NADPH--hemoprotein reductase] + O2 = 9-hydroxydodecanoate + oxidized [NADPH--hemoprotein reductase] + H2O + H(+). The enzyme catalyses dodecanoate + reduced [NADPH--hemoprotein reductase] + O2 = 10-hydroxydodecanoate + oxidized [NADPH--hemoprotein reductase] + H2O + H(+). It catalyses the reaction dodecanoate + reduced [NADPH--hemoprotein reductase] + O2 = 11-hydroxydodecanoate + oxidized [NADPH--hemoprotein reductase] + H2O + H(+). The catalysed reaction is tetradecanoate + reduced [NADPH--hemoprotein reductase] + O2 = 9-hydroxytetradecanoate + oxidized [NADPH--hemoprotein reductase] + H2O + H(+). It carries out the reaction tetradecanoate + reduced [NADPH--hemoprotein reductase] + O2 = 10-hydroxytetradecanoate + oxidized [NADPH--hemoprotein reductase] + H2O + H(+). The enzyme catalyses tetradecanoate + reduced [NADPH--hemoprotein reductase] + O2 = 11-hydroxytetradecanoate + oxidized [NADPH--hemoprotein reductase] + H2O + H(+). It catalyses the reaction tetradecanoate + reduced [NADPH--hemoprotein reductase] + O2 = 12-hydroxytetradecanoate + oxidized [NADPH--hemoprotein reductase] + H2O + H(+). The catalysed reaction is (5Z,8Z,11Z,14Z)-eicosatetraenoate + reduced [NADPH--hemoprotein reductase] + O2 = (14S,15R)-epoxy-(5Z,8Z,11Z)-eicosatrienoate + oxidized [NADPH--hemoprotein reductase] + H2O + H(+). Its function is as follows. A cytochrome P450 monooxygenase that catalyzes the in-chain oxidation of fatty acids. Catalyzes the hydroxylation of carbon-hydrogen bonds. Hydroxylates lauric and myristic acids predominantly at the omega-4 and omega-2 positions, respectively. Catalyzes the epoxidation of double bonds of polyunsaturated fatty acids (PUFA). Displays an absolute stereoselectivity in the epoxidation of arachidonic acid producing the 14(S),15(R)-epoxyeicosatrienoic acid (EET) enantiomer. Mechanistically, uses molecular oxygen inserting one oxygen atom into a substrate, and reducing the second into a water molecule, with two electrons provided by NADPH via cytochrome P450 reductase (CPR; NADPH-ferrihemoprotein reductase). The sequence is that of Cytochrome P450 4Z1 from Homo sapiens (Human).